The sequence spans 836 residues: Exonuclease 1 (836 aa).

An N-domain region spans residues 1–99 (MGIQGLLPQL…TKRERSRKEN (99 aa)). Residues Asp-30 and Asp-78 each contribute to the Mg(2+) site. The interval 82–108 (LPMKGDQETKRERSRKENLERAKEHES) is disordered. Positions 84-108 (MKGDQETKRERSRKENLERAKEHES) are enriched in basic and acidic residues. Residues 138–230 (KQEKVDYIVA…ILSGCDYLPS (93 aa)) form an I-domain region. Mg(2+) contacts are provided by Glu-150, Asp-152, Asp-171, Asp-173, and Asp-226. 3 disordered regions span residues 464–488 (RDDSASVSPQCSHDIGSDPAEDPDI), 568–641 (EDEC…TNSE), and 744–836 (TASA…TSRS). Residues 568-577 (EDECHDEDNC) show a composition bias toward acidic residues. Polar residues-rich tracts occupy residues 578 to 592 (ETGNYTLPGDQQRSS) and 744 to 758 (TASAHSDQGKITSKA).

Belongs to the XPG/RAD2 endonuclease family. EXO1 subfamily. Mg(2+) serves as cofactor.

Its subcellular location is the nucleus. Its function is as follows. Putative 5'-&gt;3' double-stranded DNA exonuclease which may also contain a cryptic 3'-&gt;5' double-stranded DNA exonuclease activity. May be involved in DNA mismatch repair (MMR). The sequence is that of Exonuclease 1 (EXO1) from Oryza sativa subsp. japonica (Rice).